The following is a 602-amino-acid chain: DNA ligase (602 aa).

E262 lines the ATP pocket. The active-site N6-AMP-lysine intermediate is the K264. R269, R284, E314, F354, R431, and K437 together coordinate ATP.

It belongs to the ATP-dependent DNA ligase family. In terms of assembly, monomer. The cofactor is Mg(2+). Mn(2+) is required as a cofactor.

It catalyses the reaction ATP + (deoxyribonucleotide)n-3'-hydroxyl + 5'-phospho-(deoxyribonucleotide)m = (deoxyribonucleotide)n+m + AMP + diphosphate.. The enzyme catalyses ADP + (deoxyribonucleotide)n-3'-hydroxyl + 5'-phospho-(deoxyribonucleotide)m = (deoxyribonucleotide)n+m + AMP + phosphate.. It carries out the reaction GTP + (deoxyribonucleotide)n-3'-hydroxyl + 5'-phospho-(deoxyribonucleotide)m = (deoxyribonucleotide)n+m + GMP + diphosphate.. With respect to regulation, inhibited in the presence of 100 mM KCl, NaCl or NH(4)Cl. Functionally, DNA ligase that seals nicks in double-stranded DNA during DNA replication, DNA recombination and DNA repair. Can also use ADP, but not NAD(+). This chain is DNA ligase, found in Aeropyrum pernix (strain ATCC 700893 / DSM 11879 / JCM 9820 / NBRC 100138 / K1).